The sequence spans 1089 residues: WD repeat-containing protein on Y chromosome (1089 aa).

7 WD repeats span residues 155–199 (EEVA…IRTA), 207–249 (PHAV…RGPF), 329–368 (RIPL…EPSA), 372–411 (GHNG…LLQT), 462–501 (THAA…RKII), 514–553 (TIDI…VIRN), and 601–641 (FHTD…RRYS). Residues 661-684 (KRSKRWASRAPHSGSHMMSHTGSH) are disordered. Residues 672 to 684 (HSGSHMMSHTGSH) show a composition bias toward low complexity. WD repeat units lie at residues 767–806 (KTGD…IPEA) and 850–889 (GHLK…LGTL). The tract at residues 1049–1089 (LNIKLPSRRRSDRTNDPRNMRTAKTRGDMGLGHRSSHTSQN) is disordered.

The sequence is that of WD repeat-containing protein on Y chromosome from Drosophila willistoni (Fruit fly).